The chain runs to 312 residues: MQSNINICTLSIFIIESMTTRIGRHINISKGFVSAPEYAKNIGCSVFQIFLGAPQQILSKARQKDELIEFGKQLIKHDLIMVVHGSYTINLCHPPGSKKFETSIKSLVKDLNATNLIGDRCLGVIIHMGKNISENKLTVDQAIDNYVTGIKTALSQTPDNTTIVLETGASQGSEVASHIDGLAQIYWCLNDAERERVYFCIDTCHIWATGYDISSPTGVKKFFKEFDKKIGVEKISCIHFNDSKTGLESKVDRHADLCYGEIGSNGLKAIAKFAKEYKIHLIMETPLDAINPETNQEISYNEEYNKVKSWLK.

Residues His84, His127, Glu166, Asp202, His205, His239, Asp252, His254, and Glu284 each coordinate Zn(2+).

This sequence belongs to the AP endonuclease 2 family. It depends on Zn(2+) as a cofactor.

The enzyme catalyses Endonucleolytic cleavage to 5'-phosphooligonucleotide end-products.. In terms of biological role, endonuclease IV plays a role in DNA repair. It cleaves phosphodiester bonds at apurinic or apyrimidinic sites (AP sites) to produce new 5'-ends that are base-free deoxyribose 5-phosphate residues. The polypeptide is Putative endonuclease 4 (Acanthamoeba polyphaga (Amoeba)).